The primary structure comprises 146 residues: Large ribosomal subunit protein uL15 (146 aa).

The segment at 1–42 (MTIKLHDLQPARGSKTTRTRVGRGEASKGKTAGRGTKGTKAR) is disordered.

Belongs to the universal ribosomal protein uL15 family. Part of the 50S ribosomal subunit.

Binds to the 23S rRNA. This is Large ribosomal subunit protein uL15 from Mycobacterium leprae (strain Br4923).